A 477-amino-acid chain; its full sequence is Cysteine--tRNA ligase (477 aa).

Cys34 serves as a coordination point for Zn(2+). The 'HIGH' region motif lies at 36–46 (PTVYDFAHIGN). Residues Cys235, His260, and Glu264 each coordinate Zn(2+). The 'KMSKS' region signature appears at 293–297 (KMSKS). Lys296 lines the ATP pocket.

The protein belongs to the class-I aminoacyl-tRNA synthetase family. In terms of assembly, monomer. Requires Zn(2+) as cofactor.

The protein resides in the cytoplasm. It carries out the reaction tRNA(Cys) + L-cysteine + ATP = L-cysteinyl-tRNA(Cys) + AMP + diphosphate. The polypeptide is Cysteine--tRNA ligase (Mesorhizobium japonicum (strain LMG 29417 / CECT 9101 / MAFF 303099) (Mesorhizobium loti (strain MAFF 303099))).